A 1081-amino-acid chain; its full sequence is Teashirt homolog 3 (1081 aa).

2 disordered regions span residues 141–161 (PSSE…SSCG) and 238–257 (HYRD…WSKP). Residues 148–161 (GSSSSSSSSSSSCG) are compositionally biased toward low complexity. 2 consecutive C2H2-type zinc fingers follow at residues 214 to 238 (FRCK…ETGH) and 275 to 299 (LKCM…KTKH). The span at 238–247 (HYRDDNHETD) shows a compositional bias: basic and acidic residues. Positions 325-364 (SLELELPSSPDSTGGTPKATISDTNDALQKNSNPYITPNN) are disordered. A compositionally biased stretch (polar residues) spans 335-364 (DSTGGTPKATISDTNDALQKNSNPYITPNN). Residues 386-404 (LKCMECGSSHDTLQELTAH) form a C2H2-type 3; atypical zinc finger. The span at 473–491 (EVDKEKAVTDEKPKQKDKP) shows a compositional bias: basic and acidic residues. 4 disordered regions span residues 473–502 (EVDK…DISS), 579–604 (NSEI…PMPK), 626–687 (EKMK…LAEP), and 855–897 (TESH…RQSN). Polar residues predominate over residues 581 to 603 (EIVSPTKNQTLVSPPSSQTSPMP). Positions 606-630 (NFHAMEELVKKVTEKVAKVEEKMKE) form a coiled coil. Ser-682 bears the Phosphoserine mark. A compositionally biased stretch (low complexity) spans 856–869 (ESHTSKSSTPSSIS). Positions 891 to 961 (RKGRQSNWNP…NVKYQLRRTG (71 aa)) form a DNA-binding region, homeobox; atypical. 2 C2H2-type zinc fingers span residues 976–998 (FFCN…LESH) and 1041–1064 (YQCK…SKTH).

It belongs to the teashirt C2H2-type zinc-finger protein family. As to quaternary structure, interacts (via homeobox domain) with APBB1 (via PID domain 1). Interacts (via N-terminus) with HDAC1 and HDAC2; the interaction is direct. Found in a trimeric complex with APBB1 and HDAC1; the interaction between HDAC1 and APBB1 is mediated by TSHZ3. Expressed in brain; strongly reduced in post-mortem elderly subjects with Alzheimer disease. Expressed in the fetal neocortex.

The protein resides in the nucleus. It is found in the cell projection. Its subcellular location is the growth cone. In terms of biological role, transcriptional regulator involved in developmental processes. Functions in association with APBB1, SET and HDAC factors as a transcriptional repressor, that inhibits the expression of CASP4. TSHZ3-mediated transcription repression involves the recruitment of histone deacetylases HDAC1 and HDAC2. Associates with chromatin in a region surrounding the CASP4 transcriptional start site(s). Regulates the development of neurons involved in both respiratory rhythm and airflow control. Promotes maintenance of nucleus ambiguus (nA) motoneurons, which govern upper airway function, and establishes a respiratory rhythm generator (RRG) activity compatible with survival at birth. Involved in the differentiation of the proximal uretic smooth muscle cells during developmental processes. Involved in the up-regulation of myocardin, that directs the expression of smooth muscle cells in the proximal ureter. Involved in the modulation of glutamatergic synaptic transmission and long-term synaptic potentiation. The sequence is that of Teashirt homolog 3 (TSHZ3) from Homo sapiens (Human).